The chain runs to 467 residues: Fumarate hydratase class II (467 aa).

Substrate is bound by residues 98–100 (SGT), Arg-126, 129–132 (HPND), 139–141 (SSN), and Thr-187. The active-site Proton donor/acceptor is the His-188. Ser-318 is an active-site residue. Substrate contacts are provided by residues Ser-319 and 324–326 (KVN).

It belongs to the class-II fumarase/aspartase family. Fumarase subfamily. Homotetramer.

The protein localises to the cytoplasm. It catalyses the reaction (S)-malate = fumarate + H2O. It functions in the pathway carbohydrate metabolism; tricarboxylic acid cycle; (S)-malate from fumarate: step 1/1. Involved in the TCA cycle. Catalyzes the stereospecific interconversion of fumarate to L-malate. The sequence is that of Fumarate hydratase class II from Shigella flexneri.